We begin with the raw amino-acid sequence, 465 residues long: Cysteine--tRNA ligase (465 aa).

Cysteine 30 is a binding site for Zn(2+). The 'HIGH' region signature appears at 32–42 (MTVYDYCHVGH). Residues cysteine 214, histidine 239, and glutamate 243 each coordinate Zn(2+). Positions 271-275 (KMSKS) match the 'KMSKS' region motif. Lysine 274 is an ATP binding site.

Belongs to the class-I aminoacyl-tRNA synthetase family. In terms of assembly, monomer. Requires Zn(2+) as cofactor.

The protein localises to the cytoplasm. The catalysed reaction is tRNA(Cys) + L-cysteine + ATP = L-cysteinyl-tRNA(Cys) + AMP + diphosphate. The sequence is that of Cysteine--tRNA ligase from Paraburkholderia xenovorans (strain LB400).